The primary structure comprises 228 residues: Ribonuclease 3 (228 aa).

The region spanning 8 to 130 (LKRLERRVDY…IIGAAFLDSD (123 aa)) is the RNase III domain. Glu43 is a Mg(2+) binding site. Residue Asp47 is part of the active site. Residues Asp116 and Glu119 each contribute to the Mg(2+) site. The active site involves Glu119. The 70-residue stretch at 157–226 (DPKTRLQEHL…ANKMLDSLSG (70 aa)) folds into the DRBM domain.

Belongs to the ribonuclease III family. As to quaternary structure, homodimer. Mg(2+) is required as a cofactor.

It is found in the cytoplasm. It catalyses the reaction Endonucleolytic cleavage to 5'-phosphomonoester.. Digests double-stranded RNA. Involved in the processing of primary rRNA transcript to yield the immediate precursors to the large and small rRNAs (23S and 16S). Processes some mRNAs, and tRNAs when they are encoded in the rRNA operon. Processes pre-crRNA and tracrRNA of type II CRISPR loci if present in the organism. This Psychromonas ingrahamii (strain DSM 17664 / CCUG 51855 / 37) protein is Ribonuclease 3.